The sequence spans 410 residues: Lissencephaly-1 homolog A (410 aa).

The region spanning Gln-7–Met-39 is the LisH domain. A coiled-coil region spans residues Thr-56–Gly-82. WD repeat units lie at residues Gly-106–Lys-147, Gly-148–Thr-187, Gly-190–Thr-229, Gly-232–Glu-271, Glu-274–Thr-333, Gly-336–Thr-375, and Ala-378–Arg-410.

Belongs to the WD repeat LIS1/nudF family. In terms of assembly, can self-associate. Component of the cytosolic PAF-AH (I) heterotetrameric enzyme, which is composed of PAFAH1B1 (beta), PAFAH1B2 (alpha2) and PAFAH1B3 (alpha1) subunits. The catalytic activity of the enzyme resides in the alpha1 (PAFAH1B3) and alpha2 (PAFAH1B2) subunits, whereas the beta subunit (PAFAH1B1) has regulatory activity. Trimer formation is not essential for the catalytic activity. Interacts with dynein, dynactin, nde1 and ndel1.

It localises to the cytoplasm. It is found in the cytoskeleton. The protein resides in the microtubule organizing center. Its subcellular location is the centrosome. Its function is as follows. Regulatory subunit (beta subunit) of the cytosolic type I platelet-activating factor (PAF) acetylhydrolase (PAF-AH (I)), an enzyme that catalyzes the hydrolyze of the acetyl group at the sn-2 position of PAF and its analogs and participates in PAF inactivation. Regulates the PAF-AH (I) activity in a catalytic dimer composition-dependent manner. Positively regulates the activity of the minus-end directed microtubule motor protein dynein. May enhance dynein-mediated microtubule sliding by targeting dynein to the microtubule plus end. Required for several dynein- and microtubule-dependent processes such as the maintenance of Golgi integrity, the peripheral transport of microtubule fragments and the coupling of the nucleus and centrosome. May be required for proliferation of neuronal precursors and neuronal migration. The sequence is that of Lissencephaly-1 homolog A (pafah1b1-1) from Salmo salar (Atlantic salmon).